A 642-amino-acid chain; its full sequence is 1,4-alpha-glucan branching enzyme GlgB (642 aa).

Catalysis depends on Asp304, which acts as the Nucleophile. Glu355 (proton donor) is an active-site residue.

Belongs to the glycosyl hydrolase 13 family. GlgB subfamily. As to quaternary structure, monomer.

It carries out the reaction Transfers a segment of a (1-&gt;4)-alpha-D-glucan chain to a primary hydroxy group in a similar glucan chain.. It functions in the pathway glycan biosynthesis; glycogen biosynthesis. Functionally, catalyzes the formation of the alpha-1,6-glucosidic linkages in glycogen by scission of a 1,4-alpha-linked oligosaccharide from growing alpha-1,4-glucan chains and the subsequent attachment of the oligosaccharide to the alpha-1,6 position. This is 1,4-alpha-glucan branching enzyme GlgB from Streptococcus pneumoniae serotype 4 (strain ATCC BAA-334 / TIGR4).